Here is a 619-residue protein sequence, read N- to C-terminus: Guanylate cyclase soluble subunit beta-1 (619 aa).

H105 lines the heme pocket. The Guanylate cyclase domain maps to 421–554; the sequence is TILFSGIVGF…NTVNLTSRTE (134 aa).

Belongs to the adenylyl cyclase class-4/guanylyl cyclase family. In terms of assembly, the active enzyme is formed by a heterodimer of an alpha and a beta subunit. Heterodimer with GUCY1A1. Can also form inactive homodimers in vitro. Requires heme as cofactor. Lung and brain.

It localises to the cytoplasm. The catalysed reaction is GTP = 3',5'-cyclic GMP + diphosphate. Its activity is regulated as follows. Activated by nitric oxide in the presence of magnesium or manganese ions, binding of NO to the heme iron increases catalytic activity up to 400 folds. Its function is as follows. Mediates responses to nitric oxide (NO) by catalyzing the biosynthesis of the signaling molecule cGMP. The protein is Guanylate cyclase soluble subunit beta-1 (GUCY1B1) of Bos taurus (Bovine).